A 70-amino-acid chain; its full sequence is DNA-directed RNA polymerase subunit epsilon (70 aa).

The protein belongs to the RNA polymerase subunit epsilon family. In terms of assembly, RNAP is composed of a core of 2 alpha, a beta and a beta' subunit. The core is associated with a delta subunit, and at least one of epsilon or omega. When a sigma factor is associated with the core the holoenzyme is formed, which can initiate transcription.

It catalyses the reaction RNA(n) + a ribonucleoside 5'-triphosphate = RNA(n+1) + diphosphate. A non-essential component of RNA polymerase (RNAP). The polypeptide is DNA-directed RNA polymerase subunit epsilon (Bacillus mycoides (strain KBAB4) (Bacillus weihenstephanensis)).